The primary structure comprises 168 residues: Mitochondrial ATP-independent inner membrane protease subunit 1a (168 aa).

Residues 1 to 47 (MRMTFLSYLKQWRGTAKEAFENVSIVAKFLCLLHVTDRYIISTTHVH) constitute a mitochondrion transit peptide. Residues serine 50 and lysine 94 contribute to the active site.

Belongs to the peptidase S26 family. IMP1 subfamily. In terms of assembly, heterodimer of 2 subunits, IMP1A/B and IMP12.

The protein localises to the mitochondrion inner membrane. Functionally, catalyzes the removal of transit peptides required for the targeting of proteins from the mitochondrial matrix, across the inner membrane, into the inter-membrane space. The sequence is that of Mitochondrial ATP-independent inner membrane protease subunit 1a from Arabidopsis thaliana (Mouse-ear cress).